The primary structure comprises 101 residues: Small ribosomal subunit protein eS24 (101 aa).

It belongs to the eukaryotic ribosomal protein eS24 family.

The protein is Small ribosomal subunit protein eS24 of Methanosarcina acetivorans (strain ATCC 35395 / DSM 2834 / JCM 12185 / C2A).